The following is a 319-amino-acid chain: Aspartate carbamoyltransferase catalytic subunit (319 aa).

Arginine 54 and threonine 55 together coordinate carbamoyl phosphate. Lysine 82 is an L-aspartate binding site. Arginine 104, histidine 134, and glutamine 137 together coordinate carbamoyl phosphate. Arginine 171 and arginine 227 together coordinate L-aspartate. Carbamoyl phosphate-binding residues include glycine 271 and proline 272.

The protein belongs to the aspartate/ornithine carbamoyltransferase superfamily. ATCase family. As to quaternary structure, heterododecamer (2C3:3R2) of six catalytic PyrB chains organized as two trimers (C3), and six regulatory PyrI chains organized as three dimers (R2).

The catalysed reaction is carbamoyl phosphate + L-aspartate = N-carbamoyl-L-aspartate + phosphate + H(+). It participates in pyrimidine metabolism; UMP biosynthesis via de novo pathway; (S)-dihydroorotate from bicarbonate: step 2/3. In terms of biological role, catalyzes the condensation of carbamoyl phosphate and aspartate to form carbamoyl aspartate and inorganic phosphate, the committed step in the de novo pyrimidine nucleotide biosynthesis pathway. This Kineococcus radiotolerans (strain ATCC BAA-149 / DSM 14245 / SRS30216) protein is Aspartate carbamoyltransferase catalytic subunit.